Reading from the N-terminus, the 27-residue chain is Conotoxin Bt9.2 (27 aa).

3 cysteine pairs are disulfide-bonded: Cys2–Cys16, Cys6–Cys19, and Cys12–Cys24. 4-hydroxyproline is present on Pro13.

Expressed by the venom duct.

The protein localises to the secreted. Its function is as follows. Probable neurotoxin that inhibits ion channels. The sequence is that of Conotoxin Bt9.2 from Conus betulinus (Beech cone).